Reading from the N-terminus, the 280-residue chain is Putative high affinity immunoglobulin gamma Fc receptor IB (280 aa).

An N-terminal signal peptide occupies residues Met-1–Gly-15. Residues Gln-16–His-198 lie on the Extracellular side of the membrane. 2 consecutive Ig-like C2-type domains span residues Ala-22–His-101 and Pro-95–Tyr-184. Cystine bridges form between Cys-43–Cys-85 and Cys-124–Cys-168. Asn-59, Asn-152, and Asn-163 each carry an N-linked (GlcNAc...) asparagine glycan. Residues Val-199–Ile-219 form a helical membrane-spanning segment. Residues Arg-220 to Thr-280 are Cytoplasmic-facing. The interval Lys-258 to Thr-280 is disordered.

It belongs to the immunoglobulin superfamily. FCGR1 family.

The protein localises to the cell membrane. Its function is as follows. May bind to the Fc region of immunoglobulins gamma with a low affinity compared to FCGR1A. May function in the humoral immune response. This is Putative high affinity immunoglobulin gamma Fc receptor IB from Homo sapiens (Human).